We begin with the raw amino-acid sequence, 225 residues long: Deoxyribose-phosphate aldolase (225 aa).

Aspartate 94 serves as the catalytic Proton donor/acceptor. The active-site Schiff-base intermediate with acetaldehyde is the lysine 158. Lysine 187 (proton donor/acceptor) is an active-site residue.

It belongs to the DeoC/FbaB aldolase family. DeoC type 1 subfamily.

It is found in the cytoplasm. The enzyme catalyses 2-deoxy-D-ribose 5-phosphate = D-glyceraldehyde 3-phosphate + acetaldehyde. Its pathway is carbohydrate degradation; 2-deoxy-D-ribose 1-phosphate degradation; D-glyceraldehyde 3-phosphate and acetaldehyde from 2-deoxy-alpha-D-ribose 1-phosphate: step 2/2. In terms of biological role, catalyzes a reversible aldol reaction between acetaldehyde and D-glyceraldehyde 3-phosphate to generate 2-deoxy-D-ribose 5-phosphate. This chain is Deoxyribose-phosphate aldolase, found in Thermococcus gammatolerans (strain DSM 15229 / JCM 11827 / EJ3).